The sequence spans 410 residues: Probable 2,3-bisphosphoglycerate-independent phosphoglycerate mutase (410 aa).

It belongs to the BPG-independent phosphoglycerate mutase family. A-PGAM subfamily.

The catalysed reaction is (2R)-2-phosphoglycerate = (2R)-3-phosphoglycerate. The protein operates within carbohydrate degradation; glycolysis; pyruvate from D-glyceraldehyde 3-phosphate: step 3/5. Functionally, catalyzes the interconversion of 2-phosphoglycerate and 3-phosphoglycerate. This Deinococcus radiodurans (strain ATCC 13939 / DSM 20539 / JCM 16871 / CCUG 27074 / LMG 4051 / NBRC 15346 / NCIMB 9279 / VKM B-1422 / R1) protein is Probable 2,3-bisphosphoglycerate-independent phosphoglycerate mutase.